Reading from the N-terminus, the 60-residue chain is Short neurotoxin 1 (60 aa).

4 cysteine pairs are disulfide-bonded: Cys3/Cys22, Cys17/Cys39, Cys41/Cys52, and Cys53/Cys58.

It belongs to the three-finger toxin family. Short-chain subfamily. Type I alpha-neurotoxin sub-subfamily. As to expression, expressed by the venom gland.

The protein resides in the secreted. In terms of biological role, binds to muscle nicotinic acetylcholine receptor (nAChR) and inhibit acetylcholine from binding to the receptor, thereby impairing neuromuscular transmission. The recombinant protein also barely blocks voltage-gated potassium channel Kv1.3/KCNA3 (2.71% inhibition at 60 nM of toxin). In Hydrophis lapemoides (Persian gulf sea snake), this protein is Short neurotoxin 1.